Reading from the N-terminus, the 73-residue chain is Large ribosomal subunit protein uL30 (73 aa).

This sequence belongs to the universal ribosomal protein uL30 family. In terms of assembly, part of the 50S ribosomal subunit.

This chain is Large ribosomal subunit protein uL30, found in Borrelia hermsii (strain HS1 / DAH).